Consider the following 829-residue polypeptide: Leucine--tRNA ligase (829 aa).

Positions 34–44 (PYPSGNIHMGH) match the 'HIGH' region motif. A 'KMSKS' region motif is present at residues 591-595 (KMSKS). Position 594 (Lys594) interacts with ATP.

The protein belongs to the class-I aminoacyl-tRNA synthetase family.

The protein localises to the cytoplasm. It catalyses the reaction tRNA(Leu) + L-leucine + ATP = L-leucyl-tRNA(Leu) + AMP + diphosphate. This chain is Leucine--tRNA ligase, found in Ehrlichia chaffeensis (strain ATCC CRL-10679 / Arkansas).